Consider the following 187-residue polypeptide: ATP-dependent protease subunit HslV (187 aa).

Residue Thr7 is part of the active site. 3 residues coordinate Na(+): Ala162, Cys165, and Thr168.

This sequence belongs to the peptidase T1B family. HslV subfamily. A double ring-shaped homohexamer of HslV is capped on each side by a ring-shaped HslU homohexamer. The assembly of the HslU/HslV complex is dependent on binding of ATP.

Its subcellular location is the cytoplasm. It carries out the reaction ATP-dependent cleavage of peptide bonds with broad specificity.. Its activity is regulated as follows. Allosterically activated by HslU binding. Functionally, protease subunit of a proteasome-like degradation complex believed to be a general protein degrading machinery. This chain is ATP-dependent protease subunit HslV, found in Methylococcus capsulatus (strain ATCC 33009 / NCIMB 11132 / Bath).